A 249-amino-acid chain; its full sequence is DNA polymerase sliding clamp 1 (249 aa).

Belongs to the PCNA family. Homotrimer. The subunits circularize to form a toroid; DNA passes through its center. Replication factor C (RFC) is required to load the toroid on the DNA.

Sliding clamp subunit that acts as a moving platform for DNA processing. Responsible for tethering the catalytic subunit of DNA polymerase and other proteins to DNA during high-speed replication. This chain is DNA polymerase sliding clamp 1, found in Pyrobaculum aerophilum (strain ATCC 51768 / DSM 7523 / JCM 9630 / CIP 104966 / NBRC 100827 / IM2).